A 173-amino-acid polypeptide reads, in one-letter code: Probable chemoreceptor glutamine deamidase CheD 2 (173 aa).

This sequence belongs to the CheD family.

The catalysed reaction is L-glutaminyl-[protein] + H2O = L-glutamyl-[protein] + NH4(+). In terms of biological role, probably deamidates glutamine residues to glutamate on methyl-accepting chemotaxis receptors (MCPs), playing an important role in chemotaxis. The protein is Probable chemoreceptor glutamine deamidase CheD 2 of Albidiferax ferrireducens (strain ATCC BAA-621 / DSM 15236 / T118) (Rhodoferax ferrireducens).